A 291-amino-acid chain; its full sequence is Ribose-phosphate pyrophosphokinase (291 aa).

ATP-binding positions include 34-36 (DGE) and 93-94 (RQ). His-127 and Asp-165 together coordinate Mg(2+). Residue Lys-188 is part of the active site. D-ribose 5-phosphate-binding positions include Arg-190, Asp-216, and 220–224 (STGGT).

This sequence belongs to the ribose-phosphate pyrophosphokinase family. Class III (archaeal) subfamily. Mg(2+) serves as cofactor.

Its subcellular location is the cytoplasm. It catalyses the reaction D-ribose 5-phosphate + ATP = 5-phospho-alpha-D-ribose 1-diphosphate + AMP + H(+). It functions in the pathway metabolic intermediate biosynthesis; 5-phospho-alpha-D-ribose 1-diphosphate biosynthesis; 5-phospho-alpha-D-ribose 1-diphosphate from D-ribose 5-phosphate (route I): step 1/1. Its function is as follows. Involved in the biosynthesis of the central metabolite phospho-alpha-D-ribosyl-1-pyrophosphate (PRPP) via the transfer of pyrophosphoryl group from ATP to 1-hydroxyl of ribose-5-phosphate (Rib-5-P). The sequence is that of Ribose-phosphate pyrophosphokinase from Sulfolobus acidocaldarius (strain ATCC 33909 / DSM 639 / JCM 8929 / NBRC 15157 / NCIMB 11770).